The primary structure comprises 227 residues: 2,3-bisphosphoglycerate-dependent phosphoglycerate mutase (227 aa).

Substrate contacts are provided by residues 8 to 15, 21 to 22, arginine 58, 110 to 113, lysine 121, 137 to 138, and 181 to 182; these read RHGKSVWN, TG, ERMY, RR, and GN. Residue histidine 9 is the Tele-phosphohistidine intermediate of the active site. Catalysis depends on glutamate 110, which acts as the Proton donor/acceptor.

The protein belongs to the phosphoglycerate mutase family. BPG-dependent PGAM subfamily.

The catalysed reaction is (2R)-2-phosphoglycerate = (2R)-3-phosphoglycerate. It participates in carbohydrate degradation; glycolysis; pyruvate from D-glyceraldehyde 3-phosphate: step 3/5. Functionally, catalyzes the interconversion of 2-phosphoglycerate and 3-phosphoglycerate. This Chlamydia felis (strain Fe/C-56) (Chlamydophila felis) protein is 2,3-bisphosphoglycerate-dependent phosphoglycerate mutase.